A 309-amino-acid polypeptide reads, in one-letter code: Wnt inhibitor of Dorsal protein (309 aa).

A signal peptide spans 1–16; sequence MIFAITFFMGITSTLA. 10 disulfide bridges follow: Cys-51–Cys-62, Cys-102–Cys-110, Cys-112–Cys-121, Cys-162–Cys-179, Cys-164–Cys-174, Cys-232–Cys-269, Cys-248–Cys-262, Cys-266–Cys-308, Cys-284–Cys-299, and Cys-286–Cys-296.

Belongs to the Wnt family.

Its subcellular location is the secreted. It is found in the extracellular space. The protein localises to the extracellular matrix. In terms of biological role, binds as a ligand to a family of frizzled seven-transmembrane receptors and acts through a cascade of genes on the nucleus. The protein is Wnt inhibitor of Dorsal protein (wntD) of Drosophila melanogaster (Fruit fly).